Consider the following 693-residue polypeptide: Heat shock protein homolog SSE1 (693 aa).

A disordered region spans residues 665–693 (LAEKLAAQRKAESEKKESKADAEGDVELD). Basic and acidic residues predominate over residues 673-686 (RKAESEKKESKADA).

Belongs to the heat shock protein 70 family.

It is found in the cytoplasm. The chain is Heat shock protein homolog SSE1 (SSE1) from Lachancea kluyveri (strain ATCC 58438 / CBS 3082 / BCRC 21498 / NBRC 1685 / JCM 7257 / NCYC 543 / NRRL Y-12651) (Yeast).